The chain runs to 349 residues: Probable dual-specificity RNA methyltransferase RlmN (349 aa).

Catalysis depends on Glu94, which acts as the Proton acceptor. A Radical SAM core domain is found at 100-334 (TETRTTACVS…VKVRRSRGKD (235 aa)). Cys107 and Cys339 are oxidised to a cystine. [4Fe-4S] cluster is bound by residues Cys114, Cys118, and Cys121. Residues 165–166 (GE), Ser197, 220–222 (SLH), and Asn296 each bind S-adenosyl-L-methionine. Cys339 acts as the S-methylcysteine intermediate in catalysis.

The protein belongs to the radical SAM superfamily. RlmN family. Requires [4Fe-4S] cluster as cofactor.

It localises to the cytoplasm. The enzyme catalyses adenosine(2503) in 23S rRNA + 2 reduced [2Fe-2S]-[ferredoxin] + 2 S-adenosyl-L-methionine = 2-methyladenosine(2503) in 23S rRNA + 5'-deoxyadenosine + L-methionine + 2 oxidized [2Fe-2S]-[ferredoxin] + S-adenosyl-L-homocysteine. It catalyses the reaction adenosine(37) in tRNA + 2 reduced [2Fe-2S]-[ferredoxin] + 2 S-adenosyl-L-methionine = 2-methyladenosine(37) in tRNA + 5'-deoxyadenosine + L-methionine + 2 oxidized [2Fe-2S]-[ferredoxin] + S-adenosyl-L-homocysteine. Its function is as follows. Specifically methylates position 2 of adenine 2503 in 23S rRNA and position 2 of adenine 37 in tRNAs. The polypeptide is Probable dual-specificity RNA methyltransferase RlmN (Flavobacterium johnsoniae (strain ATCC 17061 / DSM 2064 / JCM 8514 / BCRC 14874 / CCUG 350202 / NBRC 14942 / NCIMB 11054 / UW101) (Cytophaga johnsonae)).